Consider the following 199-residue polypeptide: Stress response protein SCP2 (199 aa).

The protein belongs to the CAPAB/TerDEXZ family.

The protein localises to the cytoplasm. The sequence is that of Stress response protein SCP2 (yceC) from Bacillus subtilis (strain 168).